A 360-amino-acid polypeptide reads, in one-letter code: DAZ-associated protein 1 (360 aa).

RRM domains follow at residues 10-97 (GKLF…RSRP) and 114-191 (NKIF…RAEP). 2 disordered regions span residues 73 to 116 (HTLD…SNKI) and 184 to 345 (VEVK…DFPF). Basic and acidic residues-rich tracts occupy residues 91–112 (QPER…ENSR) and 184–195 (VEVKRAEPRDSK). Over residues 203-231 (GSNQWGSRAMQSTANGWTGQPPQTWQGYS) the composition is skewed to polar residues. A compositionally biased stretch (gly residues) spans 242-253 (TIGGYGQPAGRG). Residues 271–301 (GPFPPPQGFPPGYATPPPFGYGYGPPPPPPD) are compositionally biased toward pro residues. Polar residues predominate over residues 328 to 345 (QSAQDLSKPPSGQQDFPF).

As to quaternary structure, component of a mRNP complex, at least composed of DAZAP1, IGF2BP3-A, STAU and VgRBP60. Binds to the 3'-UTR of Vg1 mRNA. Interacts with profilin, a protein involved in actin assembly. Interacts with VgRBP71. Expressed in oocytes.

Its subcellular location is the cytoplasm. Its function is as follows. RNA-binding protein, which is required during gametogenesis. May be involved in the actin-dependent anchoring of Vg1 mRNA in the vegetal cortex of the oocyte. In Xenopus laevis (African clawed frog), this protein is DAZ-associated protein 1 (dazap1).